The chain runs to 311 residues: UDP-N-acetylenolpyruvoylglucosamine reductase (311 aa).

Residues 34-198 enclose the FAD-binding PCMH-type domain; sequence MGGAADLFIT…LEGTFRLQKG (165 aa). The active site involves R177. The active-site Proton donor is the S227. Residue E297 is part of the active site.

This sequence belongs to the MurB family. FAD serves as cofactor.

It is found in the cytoplasm. The enzyme catalyses UDP-N-acetyl-alpha-D-muramate + NADP(+) = UDP-N-acetyl-3-O-(1-carboxyvinyl)-alpha-D-glucosamine + NADPH + H(+). Its pathway is cell wall biogenesis; peptidoglycan biosynthesis. Its function is as follows. Cell wall formation. The sequence is that of UDP-N-acetylenolpyruvoylglucosamine reductase from Shouchella clausii (strain KSM-K16) (Alkalihalobacillus clausii).